The primary structure comprises 348 residues: Inosamine-phosphate amidinotransferase 1 (348 aa).

Residues aspartate 179 and histidine 227 contribute to the active site. Residue cysteine 332 is the Amidino-cysteine intermediate of the active site.

It belongs to the amidinotransferase family. Homodimer.

It carries out the reaction 1-amino-1-deoxy-scyllo-inositol 4-phosphate + L-arginine = 1-guanidino-1-deoxy-scyllo-inositol 4-phosphate + L-ornithine. It functions in the pathway antibiotic biosynthesis; streptomycin biosynthesis. Functionally, catalyzes two non-consecutive transamidination reactions. It converts scyllo-inosamine 4-phosphate into N-amidino-scyllo-inosamine 4-phosphate and N1-amidinostreptamine 6-phosphate into streptidine 6-phosphate. The chain is Inosamine-phosphate amidinotransferase 1 (strB1) from Streptomyces glaucescens.